A 61-amino-acid polypeptide reads, in one-letter code: UPF0434 protein Pmen_1615 (61 aa).

Belongs to the UPF0434 family.

This is UPF0434 protein Pmen_1615 from Ectopseudomonas mendocina (strain ymp) (Pseudomonas mendocina).